A 215-amino-acid chain; its full sequence is Octanoyltransferase (215 aa).

The region spanning 31 to 206 is the BPL/LPL catalytic domain; it reads PESQDEVWLV…QLVRHLDYAE (176 aa). Substrate contacts are provided by residues 70–77, 137–139, and 150–152; these read RGGQVTYH, SLG, and GLA. Residue Cys168 is the Acyl-thioester intermediate of the active site.

Belongs to the LipB family.

The protein localises to the cytoplasm. The catalysed reaction is octanoyl-[ACP] + L-lysyl-[protein] = N(6)-octanoyl-L-lysyl-[protein] + holo-[ACP] + H(+). It functions in the pathway protein modification; protein lipoylation via endogenous pathway; protein N(6)-(lipoyl)lysine from octanoyl-[acyl-carrier-protein]: step 1/2. Catalyzes the transfer of endogenously produced octanoic acid from octanoyl-acyl-carrier-protein onto the lipoyl domains of lipoate-dependent enzymes. Lipoyl-ACP can also act as a substrate although octanoyl-ACP is likely to be the physiological substrate. This Pseudomonas entomophila (strain L48) protein is Octanoyltransferase.